The sequence spans 82 residues: Cell division topological specificity factor (82 aa).

Belongs to the MinE family.

Its function is as follows. Prevents the cell division inhibition by proteins MinC and MinD at internal division sites while permitting inhibition at polar sites. This ensures cell division at the proper site by restricting the formation of a division septum at the midpoint of the long axis of the cell. The protein is Cell division topological specificity factor of Buchnera aphidicola subsp. Cinara cedri (strain Cc).